The chain runs to 267 residues: MTNICIVGAGGRMGRTLIEAIQQAEGLDLTVATERAGSSLIGADAGELAGVGRLGVAISEDPAAQVAAFDVLIDFTRPEGTLAHLEICRKAGRAMVIGTTGFTEAQKQTIREAAKEIPVVFAPNMSVGVNLCLKLLDLAARVLGDEVDIEVIEAHHRHKVDAPSGTALRMGEVVAEALGRDLAQCAVYGREGHTGERERKTIGFETIRAGDIVGEHTVMFAGIGERVEITHKASSRMTFAKGAVRAAAWLKGRSAGLYDMQDVLDLR.

NAD(+) contacts are provided by residues 8 to 13 and E34; that span reads GAGGRM. R35 contacts NADP(+). NAD(+) contacts are provided by residues 98–100 and 122–125; these read GTT and APNM. The active-site Proton donor/acceptor is H155. H156 lines the (S)-2,3,4,5-tetrahydrodipicolinate pocket. Residue K159 is the Proton donor of the active site. 165 to 166 is a binding site for (S)-2,3,4,5-tetrahydrodipicolinate; the sequence is GT.

This sequence belongs to the DapB family.

Its subcellular location is the cytoplasm. The enzyme catalyses (S)-2,3,4,5-tetrahydrodipicolinate + NAD(+) + H2O = (2S,4S)-4-hydroxy-2,3,4,5-tetrahydrodipicolinate + NADH + H(+). The catalysed reaction is (S)-2,3,4,5-tetrahydrodipicolinate + NADP(+) + H2O = (2S,4S)-4-hydroxy-2,3,4,5-tetrahydrodipicolinate + NADPH + H(+). It participates in amino-acid biosynthesis; L-lysine biosynthesis via DAP pathway; (S)-tetrahydrodipicolinate from L-aspartate: step 4/4. Catalyzes the conversion of 4-hydroxy-tetrahydrodipicolinate (HTPA) to tetrahydrodipicolinate. The polypeptide is 4-hydroxy-tetrahydrodipicolinate reductase (Thioalkalivibrio sulfidiphilus (strain HL-EbGR7)).